A 403-amino-acid polypeptide reads, in one-letter code: Argininosuccinate synthase (403 aa).

Residue 10-18 coordinates ATP; sequence AYSGGVDTS. Tyr-89 serves as a coordination point for L-citrulline. Gly-119 is an ATP binding site. L-aspartate contacts are provided by Thr-121, Asn-125, and Asp-126. Position 125 (Asn-125) interacts with L-citrulline. Residues Arg-129, Ser-177, Ser-186, Glu-262, and Tyr-274 each coordinate L-citrulline.

Belongs to the argininosuccinate synthase family. Type 1 subfamily. As to quaternary structure, homotetramer.

It is found in the cytoplasm. It catalyses the reaction L-citrulline + L-aspartate + ATP = 2-(N(omega)-L-arginino)succinate + AMP + diphosphate + H(+). The protein operates within amino-acid biosynthesis; L-arginine biosynthesis; L-arginine from L-ornithine and carbamoyl phosphate: step 2/3. The polypeptide is Argininosuccinate synthase (Synechococcus sp. (strain JA-3-3Ab) (Cyanobacteria bacterium Yellowstone A-Prime)).